The following is a 149-amino-acid chain: Urease accessory protein UreE (149 aa).

It belongs to the UreE family.

The protein resides in the cytoplasm. Its function is as follows. Involved in urease metallocenter assembly. Binds nickel. Probably functions as a nickel donor during metallocenter assembly. This is Urease accessory protein UreE from Prochlorococcus marinus (strain MIT 9215).